The sequence spans 560 residues: Bifunctional NAD(P)H-hydrate repair enzyme (560 aa).

Residues 1–241 are NAD(P)H-hydrate epimerase; it reads MLSRLSERCS…WMTAPERMRA (241 aa). One can recognise a YjeF N-terminal domain in the interval 29–235; that stretch reads LRDAEPAAAA…SLGLEDWMTA (207 aa). The interval 77-81 is NADPHX 1; for epimerase activity; sequence NNGGD. Positions 78 and 145 each coordinate K(+). The tract at residues 149–155 is NADPHX 1; for epimerase activity; the sequence is GTGICGP. (6S)-NADPHX is bound by residues Y160 and D178. S181 contacts K(+). Residues 249-547 enclose the YjeF C-terminal domain; it reads LDDVYEYFGI…HRVPLIVNAS (299 aa). An ADP-dependent (S)-NAD(P)H-hydrate dehydratase region spans residues 249–560; it reads LDDVYEYFGI…PATRQRSSGP (312 aa). G351 serves as a coordination point for (6S)-NADPHX. The interval 417–423 is NADPHX 2; for dehydratase activity; it reads HPGEAAR. ADP-binding positions include 454 to 458 and 475 to 484; these read KGPGT and NAGMASGGMG. A (6S)-NADPHX-binding site is contributed by D485.

In the N-terminal section; belongs to the NnrE/AIBP family. This sequence in the C-terminal section; belongs to the NnrD/CARKD family. The cofactor is K(+).

The enzyme catalyses (6S)-NADHX + ADP = AMP + phosphate + NADH + H(+). It catalyses the reaction (6S)-NADPHX + ADP = AMP + phosphate + NADPH + H(+). It carries out the reaction (6R)-NADHX = (6S)-NADHX. The catalysed reaction is (6R)-NADPHX = (6S)-NADPHX. Its function is as follows. Bifunctional enzyme that catalyzes the epimerization of the S- and R-forms of NAD(P)HX and the dehydration of the S-form of NAD(P)HX at the expense of ADP, which is converted to AMP. This allows the repair of both epimers of NAD(P)HX, a damaged form of NAD(P)H that is a result of enzymatic or heat-dependent hydration. The sequence is that of Bifunctional NAD(P)H-hydrate repair enzyme from Leishmania infantum.